The primary structure comprises 273 residues: Putative ankyrin repeat protein RBE_0317 (273 aa).

ANK repeat units lie at residues 31 to 60 (LGKE…DFYS), 93 to 123 (NGNT…EVNT), 127 to 157 (GGNS…NVNE), 161 to 191 (YGDT…DVNE), and 195 to 225 (QGET…DTKQ).

The polypeptide is Putative ankyrin repeat protein RBE_0317 (Rickettsia bellii (strain RML369-C)).